We begin with the raw amino-acid sequence, 338 residues long: Large ribosomal subunit protein uL10 (338 aa).

A disordered region spans residues 297–338; sequence PSAQQTQTQQSTAEEKKEEKKEEEKKGPSEEEIGSGLASLFG. Over residues 298-308 the composition is skewed to low complexity; sequence SAQQTQTQQST. Residues 309-325 show a composition bias toward basic and acidic residues; that stretch reads AEEKKEEKKEEEKKGPS.

Belongs to the universal ribosomal protein uL10 family. As to quaternary structure, part of the 50S ribosomal subunit. Forms part of the ribosomal stalk which helps the ribosome interact with GTP-bound translation factors. Forms a heptameric L10(L12)2(L12)2(L12)2 complex, where L10 forms an elongated spine to which the L12 dimers bind in a sequential fashion.

Functionally, forms part of the ribosomal stalk, playing a central role in the interaction of the ribosome with GTP-bound translation factors. The chain is Large ribosomal subunit protein uL10 from Saccharolobus islandicus (strain Y.N.15.51 / Yellowstone #2) (Sulfolobus islandicus).